The following is a 331-amino-acid chain: Histone-lysine N-methyltransferase, H3 lysine-9 specific dim-5 (331 aa).

One can recognise a Pre-SET domain in the interval Val-77–Gly-159. Positions 79, 81, 87, 92, 94, 141, 145, 147, and 151 each coordinate Zn(2+). The SET domain maps to Val-162–Val-297. Residues Arg-172–Trp-174, Asp-215, Tyr-217, Arg-251, and Asn-254–His-255 each bind S-adenosyl-L-methionine. Residues Cys-257, Cys-319, Cys-321, and Cys-326 each contribute to the Zn(2+) site. One can recognise a Post-SET domain in the interval Glu-315–Trp-331.

This sequence belongs to the class V-like SAM-binding methyltransferase superfamily. Histone-lysine methyltransferase family. Suvar3-9 subfamily.

The protein resides in the nucleus. It localises to the chromosome. It catalyses the reaction L-lysyl(9)-[histone H3] + 3 S-adenosyl-L-methionine = N(6),N(6),N(6)-trimethyl-L-lysyl(9)-[histone H3] + 3 S-adenosyl-L-homocysteine + 3 H(+). Histone methyltransferase that specifically trimethylates histone H3 to form H3K9me3. H3K9me3 marks chromatin regions for DNA methylation. Dim-5 recognizes Arg-8 to Gly-12 of the H3 tail with Thr-11 and Gly-12 being the most important specificity determinants, the recognition of whcih is important to distinguish H3K9 from H3K27 and H4K20. This chain is Histone-lysine N-methyltransferase, H3 lysine-9 specific dim-5 (dim-5), found in Neurospora crassa (strain ATCC 24698 / 74-OR23-1A / CBS 708.71 / DSM 1257 / FGSC 987).